The primary structure comprises 485 residues: UDP-N-acetylmuramoyl-L-alanyl-D-glutamate--2,6-diaminopimelate ligase (485 aa).

Ser-30 contributes to the UDP-N-acetyl-alpha-D-muramoyl-L-alanyl-D-glutamate binding site. 111–117 (GTNGKTT) contacts ATP. UDP-N-acetyl-alpha-D-muramoyl-L-alanyl-D-glutamate contacts are provided by residues 153 to 154 (TT), Ser-180, Gln-186, and Arg-188. N6-carboxylysine is present on Lys-220. Meso-2,6-diaminopimelate-binding positions include Arg-378, 402–405 (DNPR), Gly-455, and Glu-459. Residues 402 to 405 (DNPR) carry the Meso-diaminopimelate recognition motif motif.

Belongs to the MurCDEF family. MurE subfamily. It depends on Mg(2+) as a cofactor. Carboxylation is probably crucial for Mg(2+) binding and, consequently, for the gamma-phosphate positioning of ATP.

The protein resides in the cytoplasm. It carries out the reaction UDP-N-acetyl-alpha-D-muramoyl-L-alanyl-D-glutamate + meso-2,6-diaminopimelate + ATP = UDP-N-acetyl-alpha-D-muramoyl-L-alanyl-gamma-D-glutamyl-meso-2,6-diaminopimelate + ADP + phosphate + H(+). It participates in cell wall biogenesis; peptidoglycan biosynthesis. In terms of biological role, catalyzes the addition of meso-diaminopimelic acid to the nucleotide precursor UDP-N-acetylmuramoyl-L-alanyl-D-glutamate (UMAG) in the biosynthesis of bacterial cell-wall peptidoglycan. The protein is UDP-N-acetylmuramoyl-L-alanyl-D-glutamate--2,6-diaminopimelate ligase of Bacteroides fragilis (strain ATCC 25285 / DSM 2151 / CCUG 4856 / JCM 11019 / LMG 10263 / NCTC 9343 / Onslow / VPI 2553 / EN-2).